Reading from the N-terminus, the 464-residue chain is Aspartyl protease 37 (464 aa).

The N-terminal stretch at 1–19 (MNAAVLLLLLALAALPASC) is a signal peptide. N-linked (GlcNAc...) asparagine glycosylation occurs at N41. Residues 89-456 (YLVKLGIGTP…NLRRGRVTFV (368 aa)) form the Peptidase A1 domain. Residue D107 is part of the active site. C117 and C123 form a disulfide bridge. N174 and N261 each carry an N-linked (GlcNAc...) asparagine glycan. The span at 299–311 (TTTTTATATATAP) shows a compositional bias: low complexity. The tract at residues 299–319 (TTTTTATATATAPAPAPTPSP) is disordered. N-linked (GlcNAc...) asparagine glycosylation is present at N320. D337 is a catalytic residue. C376 and C420 are disulfide-bonded.

The protein belongs to the peptidase A1 family.

Its function is as follows. Anther-specific aspartic protease involved in tapetal programmed cell death (PCD). Directly regulated by the transcription factor EAT1/DTD in anthers during tapetum PCD and degeneration. This is Aspartyl protease 37 from Oryza sativa subsp. japonica (Rice).